The following is a 286-amino-acid chain: 33 kDa chaperonin (286 aa).

2 disulfide bridges follow: C225–C227 and C258–C261.

This sequence belongs to the HSP33 family. Under oxidizing conditions two disulfide bonds are formed involving the reactive cysteines. Under reducing conditions zinc is bound to the reactive cysteines and the protein is inactive.

The protein resides in the cytoplasm. Redox regulated molecular chaperone. Protects both thermally unfolding and oxidatively damaged proteins from irreversible aggregation. Plays an important role in the bacterial defense system toward oxidative stress. The chain is 33 kDa chaperonin from Shewanella oneidensis (strain ATCC 700550 / JCM 31522 / CIP 106686 / LMG 19005 / NCIMB 14063 / MR-1).